The following is a 444-amino-acid chain: Exodeoxyribonuclease 7 large subunit (444 aa).

The protein belongs to the XseA family. In terms of assembly, heterooligomer composed of large and small subunits.

The protein resides in the cytoplasm. It catalyses the reaction Exonucleolytic cleavage in either 5'- to 3'- or 3'- to 5'-direction to yield nucleoside 5'-phosphates.. Its function is as follows. Bidirectionally degrades single-stranded DNA into large acid-insoluble oligonucleotides, which are then degraded further into small acid-soluble oligonucleotides. This is Exodeoxyribonuclease 7 large subunit from Hahella chejuensis (strain KCTC 2396).